Reading from the N-terminus, the 675-residue chain is Pesticidal crystal protein Cry10Aa (675 aa).

Belongs to the delta endotoxin family.

Its function is as follows. Promotes colloidosmotic lysis by binding to the midgut epithelial cells of mosquitos. Active on Aedes aegypti. This is Pesticidal crystal protein Cry10Aa (cry10Aa) from Bacillus thuringiensis subsp. israelensis.